Reading from the N-terminus, the 557-residue chain is Dihydroxy-acid dehydratase (557 aa).

C47 is a binding site for [2Fe-2S] cluster. D79 contributes to the Mg(2+) binding site. [2Fe-2S] cluster is bound at residue C120. Residues D121 and K122 each coordinate Mg(2+). At K122 the chain carries N6-carboxylysine. C192 lines the [2Fe-2S] cluster pocket. E444 serves as a coordination point for Mg(2+). Residue S470 is the Proton acceptor of the active site.

This sequence belongs to the IlvD/Edd family. In terms of assembly, homodimer. [2Fe-2S] cluster serves as cofactor. Requires Mg(2+) as cofactor.

The catalysed reaction is (2R)-2,3-dihydroxy-3-methylbutanoate = 3-methyl-2-oxobutanoate + H2O. The enzyme catalyses (2R,3R)-2,3-dihydroxy-3-methylpentanoate = (S)-3-methyl-2-oxopentanoate + H2O. It functions in the pathway amino-acid biosynthesis; L-isoleucine biosynthesis; L-isoleucine from 2-oxobutanoate: step 3/4. Its pathway is amino-acid biosynthesis; L-valine biosynthesis; L-valine from pyruvate: step 3/4. In terms of biological role, functions in the biosynthesis of branched-chain amino acids. Catalyzes the dehydration of (2R,3R)-2,3-dihydroxy-3-methylpentanoate (2,3-dihydroxy-3-methylvalerate) into 2-oxo-3-methylpentanoate (2-oxo-3-methylvalerate) and of (2R)-2,3-dihydroxy-3-methylbutanoate (2,3-dihydroxyisovalerate) into 2-oxo-3-methylbutanoate (2-oxoisovalerate), the penultimate precursor to L-isoleucine and L-valine, respectively. This Parasynechococcus marenigrum (strain WH8102) protein is Dihydroxy-acid dehydratase.